The chain runs to 376 residues: Pyrimidine monooxygenase RutA (376 aa).

FMN contacts are provided by residues 61–62 (IK), Asn-127, Glu-136, 152–153 (RY), and Ser-202.

The protein belongs to the NtaA/SnaA/DszA monooxygenase family. RutA subfamily.

It catalyses the reaction uracil + FMNH2 + NADH + O2 = (Z)-3-ureidoacrylate + FMN + NAD(+) + H2O + H(+). It carries out the reaction thymine + FMNH2 + NADH + O2 = (Z)-2-methylureidoacrylate + FMN + NAD(+) + H2O + H(+). Functionally, catalyzes the pyrimidine ring opening between N-3 and C-4 by an unusual flavin hydroperoxide-catalyzed mechanism, adding oxygen atoms in the process to yield ureidoacrylate peracid, that immediately reacts with FMN forming ureidoacrylate and FMN-N(5)-oxide. The FMN-N(5)-oxide reacts spontaneously with NADH to produce FMN. Requires the flavin reductase RutF to regenerate FMN in vivo. In Methylorubrum extorquens (strain CM4 / NCIMB 13688) (Methylobacterium extorquens), this protein is Pyrimidine monooxygenase RutA.